We begin with the raw amino-acid sequence, 123 residues long: Zinc metalloproteinase-disintegrin-like jerdohagin (123 aa).

The Peptidase M12B domain occupies 6 to 52; it reads RYLYIRHDREACTCHANSCIMSAYFSNSHVQYENYINDCKPQCILNE. Zn(2+) is bound at residue H12. A disulfide bridge links C19 with C24. 2 residues coordinate Ca(2+): C48 and N51. A Disintegrin domain is found at 53-80; sequence LHSWVECESGECCEQCRSECDIAESCTN. 4 disulfide bridges follow: C59–C65, C64–C78, C72–C90, and C106–C116. Positions 71 to 73 match the D/ECD-tripeptide motif; it reads ECD.

The protein belongs to the venom metalloproteinase (M12B) family. P-III subfamily. P-IIIa sub-subfamily. In terms of assembly, monomer. The cofactor is Zn(2+). The N-terminus is blocked. As to expression, expressed by the venom gland.

It is found in the secreted. Its proteolytic and hemorrhagic activities are inhibited by EDTA, but not by PMSF. Its function is as follows. Snake venom metalloproteinase that has high hemorrhagic activity and degrades the alpha-chain of fibrinogen (FGA), leaving the beta- and the gamma-chain intact. It may also inhibit platelet aggregation. Cleaves insulin B chain at '25-Phe-|-Val-26', '26-Val-|-Asn-27', '29-His-|-Leu-30', '30-Leu-|-Cys-31', '33-Ser-|-His-34', '35-Leu-|-Val-36', '40-Tyr-|-Leu-41', '41-Leu-|-Val-42', '42-Val-|-Cys-43', '43-Cys-|-Gly-44', '44-Gly-|-Glu-45', '46-Arg-|-Gly-47', '47-Gly-|-Phe-48', '49-Phe-|-Tyr-50' and '52-Pro-|-Lys-53' bonds. Also cleaves human prothrombin (72 kDa) and activation fragment F1 (27 kDa) of activated human prothrombin, to generate two new proteins of 68 and 23 kDa. This is Zinc metalloproteinase-disintegrin-like jerdohagin from Protobothrops jerdonii (Jerdon's pitviper).